A 106-amino-acid chain; its full sequence is MNDSEFHRLADTLWLTIEERLDDWDGDSDIDCEINGGVLTITFENGSKIIINRQEPLHQVWLATKQGGYHFDLKGDEWICDRSGETFWDLLEQAATQQAGETVSFR.

It belongs to the frataxin family.

Functionally, involved in iron-sulfur (Fe-S) cluster assembly. May act as a regulator of Fe-S biogenesis. This Escherichia fergusonii (strain ATCC 35469 / DSM 13698 / CCUG 18766 / IAM 14443 / JCM 21226 / LMG 7866 / NBRC 102419 / NCTC 12128 / CDC 0568-73) protein is Iron-sulfur cluster assembly protein CyaY.